The chain runs to 165 residues: E3 ubiquitin ligase complex SCF subunit sconC (165 aa).

Positions 106–165 are interaction with the F-box domain of F-box proteins; the sequence is ILAANYLDIKALLDVGCKTVANMIKGKSPEEIRKTFNIQNDFTPEEEDQIRRENEWAEDR.

It belongs to the SKP1 family. As to quaternary structure, component of the SCF (SKP1-CUL1-F-box protein) E3 ubiquitin ligase complexes.

It participates in protein modification; protein ubiquitination. In terms of biological role, essential component of the SCF (SKP1-CUL1-F-box protein) E3 ubiquitin ligase complexes, which mediate the ubiquitination and subsequent proteasomal degradation of target proteins. Controls sulfur metabolite repression, probably by mediating the inactivation or degradation of the metR transcription factor. The protein is E3 ubiquitin ligase complex SCF subunit sconC (sconC) of Arthroderma otae (Microsporum canis).